Reading from the N-terminus, the 292-residue chain is uncharacterized protein (292 aa).

The 59-residue stretch at 1 to 59 (MTITQLKVFVKIAETGSFTKAGQALNMTQPAVSHAISAIEAELDVKLIIRDRRNGLMLT) folds into the HTH lysR-type domain. The H-T-H motif DNA-binding region spans 18–37 (FTKAGQALNMTQPAVSHAIS).

Belongs to the LysR transcriptional regulatory family.

This is an uncharacterized protein from Bacillus subtilis (strain 168).